Reading from the N-terminus, the 514-residue chain is Nucleus accumbens-associated protein 1 (514 aa).

Positions 30 to 94 constitute a BTB domain; it reads CDVSVVVKGH…CYTGRLSMNM (65 aa). Lysine 167 participates in a covalent cross-link: Glycyl lysine isopeptide (Lys-Gly) (interchain with G-Cter in SUMO1); alternate. A Glycyl lysine isopeptide (Lys-Gly) (interchain with G-Cter in SUMO2); alternate cross-link involves residue lysine 167. Residue lysine 182 forms a Glycyl lysine isopeptide (Lys-Gly) (interchain with G-Cter in SUMO2) linkage. Disordered stretches follow at residues 183–205 and 242–279; these read RLWD…RKMA and PSMS…EEGT. At serine 187 the chain carries Phosphoserine. A compositionally biased stretch (polar residues) spans 242–251; the sequence is PSMSERTSPG. Serine 245 is modified (phosphoserine; by PKC). The segment covering 252 to 264 has biased composition (low complexity); it reads TSSAYTSDSPSSY. Residues 267–279 show a composition bias toward acidic residues; sequence EEDEEEDAGEEGT. Glycyl lysine isopeptide (Lys-Gly) (interchain with G-Cter in SUMO2) cross-links involve residues lysine 304, lysine 438, lysine 466, and lysine 485. The BEN domain occupies 360 to 457; sequence GTNVYITRAQ…DMCTNARRVV (98 aa). Residues serine 492 and serine 496 each carry the phosphoserine modification.

As to quaternary structure, homooligomer; mediated by the BTB domain. Interacts with HDAC3 and HDAC4. Interacts (via BTB domain) with CUL3, PSMD7 and RCOR1. As to expression, ubiquitously expressed with higher expression in the brain, kidney and liver, and at lower levels in heart, lung and testes.

The protein localises to the nucleus. It localises to the cytoplasm. Its function is as follows. Functions as a transcriptional repressor. Seems to function as a transcriptional corepressor in neuronal cells through recruitment of HDAC3 and HDAC4. Contributes to tumor progression, and tumor cell proliferation and survival. This may be mediated at least in part through repressing transcriptional activity of GADD45GIP1. Required for recruiting the proteasome from the nucleus to the cytoplasm and dendritic spines. Involved in the acute behavioral and neurological responses to cocaine and amphetamines. The polypeptide is Nucleus accumbens-associated protein 1 (Nacc1) (Mus musculus (Mouse)).